The following is a 278-amino-acid chain: Autotransporter adhesin BtaF (278 aa).

The N-terminal stretch at 1–29 is a signal peptide; that stretch reads MKLPPVFVFELVENQGLANIALIRPRVIA. The tract at residues 30–182 is surface exposed passenger domain; the sequence is PDNNLRPGGI…RAAIRQNSAA (153 aa). The tract at residues 186–224 is outer membrane translocation of the passenger domain; that stretch reads LGQRVDGLQGQINSARKEARAGAANAAALSGLRYDNRPG. The segment at 225–278 is translocator domain; sequence KVSIATGVGGFKGSTALAAGIGYTSKNENARYNVSVAYNEAGTSWNAGASFTLN.

This sequence belongs to the autotransporter-2 (AT-2) (TC 1.B.40) family. As to quaternary structure, homotrimer.

Its subcellular location is the cell surface. It is found in the cell outer membrane. In terms of biological role, participates in bacterial attachment to several surfaces, including various extracellular matrix (ECM) components and a hydrophobic abiotic surface. Involved in adhesion to host epithelial cells and is required for full virulence in mice. Also implicated in the resistance to porcine serum. In Brucella suis biovar 1 (strain 1330), this protein is Autotransporter adhesin BtaF.